A 475-amino-acid polypeptide reads, in one-letter code: Ribulose bisphosphate carboxylase large chain (475 aa).

The propeptide occupies 1 to 2; it reads MS. Residue proline 3 is modified to N-acetylproline. The residue at position 14 (lysine 14) is an N6,N6,N6-trimethyllysine. Substrate-binding residues include asparagine 123 and threonine 173. Residue lysine 175 is the Proton acceptor of the active site. Lysine 177 serves as a coordination point for substrate. Mg(2+) is bound by residues lysine 201, aspartate 203, and glutamate 204. Residue lysine 201 is modified to N6-carboxylysine. The active-site Proton acceptor is the histidine 294. Arginine 295, histidine 327, and serine 379 together coordinate substrate.

The protein belongs to the RuBisCO large chain family. Type I subfamily. Heterohexadecamer of 8 large chains and 8 small chains; disulfide-linked. The disulfide link is formed within the large subunit homodimers. The cofactor is Mg(2+). The disulfide bond which can form in the large chain dimeric partners within the hexadecamer appears to be associated with oxidative stress and protein turnover.

The protein resides in the plastid. Its subcellular location is the chloroplast. The catalysed reaction is 2 (2R)-3-phosphoglycerate + 2 H(+) = D-ribulose 1,5-bisphosphate + CO2 + H2O. It catalyses the reaction D-ribulose 1,5-bisphosphate + O2 = 2-phosphoglycolate + (2R)-3-phosphoglycerate + 2 H(+). In terms of biological role, ruBisCO catalyzes two reactions: the carboxylation of D-ribulose 1,5-bisphosphate, the primary event in carbon dioxide fixation, as well as the oxidative fragmentation of the pentose substrate in the photorespiration process. Both reactions occur simultaneously and in competition at the same active site. In Keteleeria davidiana (David's keteleeria), this protein is Ribulose bisphosphate carboxylase large chain.